The following is a 121-amino-acid chain: Fluoride-specific ion channel FluC 1 (121 aa).

4 helical membrane-spanning segments follow: residues 3-23 (YLYIFVGGALGALIRFCLSML), 29-49 (IPLGTFVANLLGAFLMGSIGA), 67-87 (TGLLGALTTFSTFQFELVTLF), and 92-112 (FILFTIYGVTSYILGILSCYL). Na(+) is bound by residues glycine 71 and threonine 74.

It belongs to the fluoride channel Fluc/FEX (TC 1.A.43) family.

It is found in the cell membrane. The enzyme catalyses fluoride(in) = fluoride(out). With respect to regulation, na(+) is not transported, but it plays an essential structural role and its presence is essential for fluoride channel function. Functionally, fluoride-specific ion channel. Important for reducing fluoride concentration in the cell, thus reducing its toxicity. In Staphylococcus epidermidis (strain ATCC 35984 / DSM 28319 / BCRC 17069 / CCUG 31568 / BM 3577 / RP62A), this protein is Fluoride-specific ion channel FluC 1.